We begin with the raw amino-acid sequence, 61 residues long: Alpha-conotoxin-like Tx1.2 (61 aa).

The signal sequence occupies residues 1–20 (MFTVFLLVVLATTVVSFTSG). A propeptide spanning residues 21–42 (RSTFRGRNAAAKASGLVSLTDR) is cleaved from the precursor. Residues proline 44 and proline 50 each carry the 4-hydroxyproline modification. Cystine bridges form between cysteine 46–cysteine 52 and cysteine 47–cysteine 60. The ser-Xaa-Pro motif, crucial for potent interaction with nAChR stretch occupies residues 48-50 (SHP).

This sequence belongs to the conotoxin A superfamily. Expressed by the venom duct.

The protein resides in the secreted. Alpha-conotoxins act on postsynaptic membranes, they bind to the nicotinic acetylcholine receptors (nAChR) and thus inhibit them. This toxin also inhibits high voltage-activated (HVA) calcium channel currents in rat DRG neurons (8% inhibition at 1 uM toxin) probably by activating GABA(B) receptors (GABBR1 and/or GABBR2). This Conus textile (Cloth-of-gold cone) protein is Alpha-conotoxin-like Tx1.2.